The sequence spans 82 residues: Small ribosomal subunit protein bS16 (82 aa).

The protein belongs to the bacterial ribosomal protein bS16 family.

The chain is Small ribosomal subunit protein bS16 from Tolumonas auensis (strain DSM 9187 / NBRC 110442 / TA 4).